Here is a 355-residue protein sequence, read N- to C-terminus: MRGVLIAAMVALVVSLLGTPWVIRFFRRQGYGQEIREDGPSSHLTKRGTPTMGGTVIIVATLVGYFLAHLVTGIGFTASGLLVLLVMTGLGIVGFLDDYIKIRKQRSLGLTARMKFTGQAAVALAFGLLAVRFKNHAGLLPGSTYISIVRDTSLTVGIIGFPLLAWIIIAATSNAVNLTDGLDGLAAGTSAMVFGAYVVISFWQFGNLCEPGDSPAGCYAVRDPLDVALVAAAAMGACFGFLWWNASPAKIFMGDTGSLALGGAFASIAIVSRTELLLVVLGGLFVIETLSVMIQVAFFKATKKRVFNMAPIHHHFELAEWPETTVIIRFWIVSGLAVAFGLGLFYAEFLSHGNG.

10 helical membrane-spanning segments follow: residues 3–23 (GVLIAAMVALVVSLLGTPWVI), 56–76 (VIIVATLVGYFLAHLVTGIGF), 80–100 (GLLVLLVMTGLGIVGFLDDYI), 120–140 (AAVALAFGLLAVRFKNHAGLL), 152–172 (TSLTVGIIGFPLLAWIIIAAT), 185–205 (LAAGTSAMVFGAYVVISFWQF), 224–244 (PLDVALVAAAAMGACFGFLWW), 251–271 (IFMGDTGSLALGGAFASIAIV), 276–296 (LLLVVLGGLFVIETLSVMIQV), and 330–350 (FWIVSGLAVAFGLGLFYAEFL).

Belongs to the glycosyltransferase 4 family. MraY subfamily. The cofactor is Mg(2+).

It is found in the cell membrane. It catalyses the reaction UDP-N-acetyl-alpha-D-muramoyl-L-alanyl-gamma-D-glutamyl-meso-2,6-diaminopimeloyl-D-alanyl-D-alanine + di-trans,octa-cis-undecaprenyl phosphate = di-trans,octa-cis-undecaprenyl diphospho-N-acetyl-alpha-D-muramoyl-L-alanyl-D-glutamyl-meso-2,6-diaminopimeloyl-D-alanyl-D-alanine + UMP. The protein operates within cell wall biogenesis; peptidoglycan biosynthesis. In terms of biological role, catalyzes the initial step of the lipid cycle reactions in the biosynthesis of the cell wall peptidoglycan: transfers peptidoglycan precursor phospho-MurNAc-pentapeptide from UDP-MurNAc-pentapeptide onto the lipid carrier undecaprenyl phosphate, yielding undecaprenyl-pyrophosphoryl-MurNAc-pentapeptide, known as lipid I. The sequence is that of Phospho-N-acetylmuramoyl-pentapeptide-transferase from Frankia alni (strain DSM 45986 / CECT 9034 / ACN14a).